Here is a 452-residue protein sequence, read N- to C-terminus: Exodeoxyribonuclease 7 large subunit (452 aa).

Belongs to the XseA family. In terms of assembly, heterooligomer composed of large and small subunits.

The protein localises to the cytoplasm. It catalyses the reaction Exonucleolytic cleavage in either 5'- to 3'- or 3'- to 5'-direction to yield nucleoside 5'-phosphates.. Functionally, bidirectionally degrades single-stranded DNA into large acid-insoluble oligonucleotides, which are then degraded further into small acid-soluble oligonucleotides. This Bacillus cereus (strain 03BB102) protein is Exodeoxyribonuclease 7 large subunit.